The following is an 807-amino-acid chain: 1,4-alpha-glucan branching enzyme GlgB (807 aa).

Residue D405 is the Nucleophile of the active site. E458 (proton donor) is an active-site residue.

It belongs to the glycosyl hydrolase 13 family. GlgB subfamily. In terms of assembly, monomer.

The catalysed reaction is Transfers a segment of a (1-&gt;4)-alpha-D-glucan chain to a primary hydroxy group in a similar glucan chain.. Its pathway is glycan biosynthesis; glycogen biosynthesis. Its function is as follows. Catalyzes the formation of the alpha-1,6-glucosidic linkages in glycogen by scission of a 1,4-alpha-linked oligosaccharide from growing alpha-1,4-glucan chains and the subsequent attachment of the oligosaccharide to the alpha-1,6 position. This is 1,4-alpha-glucan branching enzyme GlgB from Histophilus somni (strain 129Pt) (Haemophilus somnus).